A 251-amino-acid polypeptide reads, in one-letter code: Imidazole glycerol phosphate synthase subunit HisF (251 aa).

Residues Asp-11 and Asp-130 contribute to the active site.

This sequence belongs to the HisA/HisF family. In terms of assembly, heterodimer of HisH and HisF.

Its subcellular location is the cytoplasm. The enzyme catalyses 5-[(5-phospho-1-deoxy-D-ribulos-1-ylimino)methylamino]-1-(5-phospho-beta-D-ribosyl)imidazole-4-carboxamide + L-glutamine = D-erythro-1-(imidazol-4-yl)glycerol 3-phosphate + 5-amino-1-(5-phospho-beta-D-ribosyl)imidazole-4-carboxamide + L-glutamate + H(+). It functions in the pathway amino-acid biosynthesis; L-histidine biosynthesis; L-histidine from 5-phospho-alpha-D-ribose 1-diphosphate: step 5/9. Its function is as follows. IGPS catalyzes the conversion of PRFAR and glutamine to IGP, AICAR and glutamate. The HisF subunit catalyzes the cyclization activity that produces IGP and AICAR from PRFAR using the ammonia provided by the HisH subunit. The polypeptide is Imidazole glycerol phosphate synthase subunit HisF (Chlorobium chlorochromatii (strain CaD3)).